The sequence spans 185 residues: Ribosome-recycling factor (185 aa).

The protein belongs to the RRF family.

The protein resides in the cytoplasm. Responsible for the release of ribosomes from messenger RNA at the termination of protein biosynthesis. May increase the efficiency of translation by recycling ribosomes from one round of translation to another. In Shewanella denitrificans (strain OS217 / ATCC BAA-1090 / DSM 15013), this protein is Ribosome-recycling factor.